The chain runs to 359 residues: MAHRTALYDAHLAAGGKMVDFGGWDMPINYGSQIEEHHAVRQNAGVFDVSHMTVVDIAGAGARDYLRQLLANDVDRIDPGRALYTGMLNDNGGVIDDLIVYKRDNDYRLVVNCATRETDLGWMEKHAGGFAVDIHERPELAMLAIQGPKARDILAGLLNGSRADAVKSLKVFAFAEDGDWMIARTGYTGEDGVEIMLPNADALTLWEQLLEAGVSPIGLGARDTLRLEAGLNLYGNDMDESITPWEANMGWTVMLNDREFIGRQPLLNQKENGHSEQVGLILEGKGVLRAHQKVLMPNGEEGEITSGTFSPTLGKSIALARLPAGATGKVDVEIRNKRQVAQVVKPPFVRNGNAVYKEQ.

This sequence belongs to the GcvT family. The glycine cleavage system is composed of four proteins: P, T, L and H.

The catalysed reaction is N(6)-[(R)-S(8)-aminomethyldihydrolipoyl]-L-lysyl-[protein] + (6S)-5,6,7,8-tetrahydrofolate = N(6)-[(R)-dihydrolipoyl]-L-lysyl-[protein] + (6R)-5,10-methylene-5,6,7,8-tetrahydrofolate + NH4(+). The glycine cleavage system catalyzes the degradation of glycine. The sequence is that of Aminomethyltransferase from Alcanivorax borkumensis (strain ATCC 700651 / DSM 11573 / NCIMB 13689 / SK2).